The primary structure comprises 617 residues: tRNA-dihydrouridine(47) synthase [NAD(P)(+)] (617 aa).

The C3H1-type zinc finger occupies 42 to 70; sequence KENNALCPAISIGNECPYKENCKFPHDVE. Residues 160 to 193 form a disordered region; it reads EEKPDPSSKVSNIPEENRDATSAISEGKETESVS. FMN is bound by residues 245–247 and Gln308; that span reads PLT. The active-site Proton donor is Cys340. Residues Lys380, His411, 460-462, and 483-484 contribute to the FMN site; these read NGD and AR.

It belongs to the Dus family. Dus3 subfamily. FMN is required as a cofactor.

The protein localises to the cytoplasm. It is found in the nucleus. It catalyses the reaction 5,6-dihydrouridine(47) in tRNA + NAD(+) = uridine(47) in tRNA + NADH + H(+). It carries out the reaction 5,6-dihydrouridine(47) in tRNA + NADP(+) = uridine(47) in tRNA + NADPH + H(+). The catalysed reaction is a 5,6-dihydrouridine in mRNA + NAD(+) = a uridine in mRNA + NADH + H(+). The enzyme catalyses a 5,6-dihydrouridine in mRNA + NADP(+) = a uridine in mRNA + NADPH + H(+). Functionally, catalyzes the synthesis of dihydrouridine, a modified base, in various RNAs, such as tRNAs and mRNAs. Modifies the uridine in position 47 (U47) in the D-loop of tRNAs. Also able to mediate formation of dihydrouridine outside of the D-loop of tRNAs. Catalyzes the synthesis of dihydrouridine in some mRNAs, thereby affecting their translation. Dus3-mediated dihydrouridylation of the mRNA encoding alpha-tubulin nda2 is required for meiotic chromosome segregation. This is tRNA-dihydrouridine(47) synthase [NAD(P)(+)] from Schizosaccharomyces pombe (strain 972 / ATCC 24843) (Fission yeast).